Reading from the N-terminus, the 310-residue chain is HPr kinase/phosphorylase (310 aa).

Catalysis depends on residues His-136 and Lys-157. 151–158 contributes to the ATP binding site; that stretch reads GDSGIGKS. Ser-158 is a binding site for Mg(2+). Residue Asp-175 is the Proton acceptor; for phosphorylation activity. Proton donor; for dephosphorylation activity of the active site. Positions 199-208 are important for the catalytic mechanism of both phosphorylation and dephosphorylation; sequence LEIRGLGIIN. Glu-200 serves as a coordination point for Mg(2+). The active site involves Arg-241. Residues 262–267 are important for the catalytic mechanism of dephosphorylation; sequence PVRPGR.

It belongs to the HPrK/P family. Homohexamer. Requires Mg(2+) as cofactor.

The enzyme catalyses [HPr protein]-L-serine + ATP = [HPr protein]-O-phospho-L-serine + ADP + H(+). The catalysed reaction is [HPr protein]-O-phospho-L-serine + phosphate + H(+) = [HPr protein]-L-serine + diphosphate. Functionally, catalyzes the ATP- as well as the pyrophosphate-dependent phosphorylation of a specific serine residue in HPr, a phosphocarrier protein of the phosphoenolpyruvate-dependent sugar phosphotransferase system (PTS). HprK/P also catalyzes the pyrophosphate-producing, inorganic phosphate-dependent dephosphorylation (phosphorolysis) of seryl-phosphorylated HPr (P-Ser-HPr). The two antagonistic activities of HprK/P are regulated by several intracellular metabolites, which change their concentration in response to the absence or presence of rapidly metabolisable carbon sources (glucose, fructose, etc.) in the growth medium. Therefore, by controlling the phosphorylation state of HPr, HPrK/P is a sensor enzyme that plays a major role in the regulation of carbon metabolism and sugar transport: it mediates carbon catabolite repression (CCR), and regulates PTS-catalyzed carbohydrate uptake and inducer exclusion. This is HPr kinase/phosphorylase from Staphylococcus aureus (strain Mu3 / ATCC 700698).